We begin with the raw amino-acid sequence, 318 residues long: Cytochrome f (318 aa).

An N-terminal signal peptide occupies residues 1–34; sequence MQNRNFFEYPKNWIILLIPIFTTFNLLFTSDCYA. Residues F35, C55, C58, and H59 each contribute to the heme site. Residues 284 to 303 form a helical membrane-spanning segment; sequence LQGLLVFLFLVVLAQVFLVL.

Belongs to the cytochrome f family. As to quaternary structure, the 4 large subunits of the cytochrome b6-f complex are cytochrome b6, subunit IV (17 kDa polypeptide, petD), cytochrome f and the Rieske protein, while the 4 small subunits are PetG, PetL, PetM and PetN. The complex functions as a dimer. Heme is required as a cofactor.

It is found in the plastid. The protein resides in the chloroplast thylakoid membrane. Component of the cytochrome b6-f complex, which mediates electron transfer between photosystem II (PSII) and photosystem I (PSI), cyclic electron flow around PSI, and state transitions. The chain is Cytochrome f from Chaetosphaeridium globosum (Charophycean green alga).